Consider the following 148-residue polypeptide: MKVILQQDVKNLGKKGDIVDIAEGYGRNYVLPRGLAIEATPANLKNLERLKANEAKKKEQELMDAKELGAKLSGITVKVRSKAGEGGRLFGAVTNKEIAETVEKQFGLKVDKRKYELKQPIKTLGHYPITVKIHPAVSAELKVEVVSE.

This sequence belongs to the bacterial ribosomal protein bL9 family.

Functionally, binds to the 23S rRNA. This chain is Large ribosomal subunit protein bL9, found in Heliobacterium modesticaldum (strain ATCC 51547 / Ice1).